The sequence spans 372 residues: Glutamate 5-kinase (372 aa).

K14 is an ATP binding site. Residues S54, D141, and N153 each coordinate substrate. Residue 173 to 174 participates in ATP binding; sequence TD. The PUA domain maps to 280–358; the sequence is RGHVVIDAGA…GEIEIVLGYM (79 aa).

Belongs to the glutamate 5-kinase family.

It localises to the cytoplasm. The enzyme catalyses L-glutamate + ATP = L-glutamyl 5-phosphate + ADP. It functions in the pathway amino-acid biosynthesis; L-proline biosynthesis; L-glutamate 5-semialdehyde from L-glutamate: step 1/2. Its function is as follows. Catalyzes the transfer of a phosphate group to glutamate to form L-glutamate 5-phosphate. The protein is Glutamate 5-kinase of Burkholderia orbicola (strain MC0-3).